The following is an 876-amino-acid chain: Protein TORMOZ EMBRYO DEFECTIVE (876 aa).

WD repeat units follow at residues 58–97, 100–139, 142–183, 190–229, 255–294, 308–347, 356–396, 399–441, 444–484, 497–536, 539–580, 581–620, and 623–662; these read GESD…CIRS, GHEG…CTHY, GHKG…TEKK, KHFS…CKAT, LDQK…CLYE, ESKR…EETE, GYNE…CSYV, GHKE…CIGV, GHNG…EDSE, AHDK…HVVT, GHKR…KTFE, GHTS…CIAT, and QHED…DKED. The tract at residues 816–876 is disordered; the sequence is VETEYPKDEK…AEAQGSVIAV (61 aa). The span at 819–831 shows a compositional bias: basic and acidic residues; the sequence is EYPKDEKKKEKDV. Positions 848-855 match the Nuclear localization signal motif; it reads SRKRKSQK. Residues 849–864 are compositionally biased toward basic residues; the sequence is RKRKSQKSKGKSNKKR.

Preferentially expressed in dividing cells in a variety of tissues and meristematic regions.

It is found in the nucleus. The protein resides in the nucleolus. Its function is as follows. Essential protein involved in the regulation of cell division planes during embryogenesis which defines cell patterning, especially longitudinal division planes of the proembryo, probably via the regulation of embryo patterning genes expression patterns. In Arabidopsis thaliana (Mouse-ear cress), this protein is Protein TORMOZ EMBRYO DEFECTIVE.